The sequence spans 145 residues: uncharacterized protein (145 aa).

It belongs to the methyltransferase superfamily.

Its function is as follows. Probable methyltransferase. This is an uncharacterized protein from Schizosaccharomyces pombe (strain 972 / ATCC 24843) (Fission yeast).